Here is a 301-residue protein sequence, read N- to C-terminus: MHRSISIRILITNLMIVILGLVGLTGNAIVFWLLLFRLRRNAFSIYILNLALADFLFLLCHIIASTEHILTFSSPNSIFINCLYTFRVLLYIAGLNMLSAISIERCLSVMCPIWYRCHRPEHTSTVMCAMIWVLSLLLCILYRYFCGFLDTKYEDDYGCLAMNFLTTAYLMFLFVVLCVSSLALLARLFCGAGRMKLTRLYVTITLTLLVFLLCGLPCGFYWFLLSKIKNVFSVFEFSLYLTSVVLTAINSCANPIIYFFVGSFRHRLKHQTLKMVLQSALQDTPETPENMVEMSRNKAEL.

Residues 1-15 (MHRSISIRILITNLM) lie on the Extracellular side of the membrane. A helical transmembrane segment spans residues 16 to 36 (IVILGLVGLTGNAIVFWLLLF). Residues 37-42 (RLRRNA) lie on the Cytoplasmic side of the membrane. The chain crosses the membrane as a helical span at residues 43–63 (FSIYILNLALADFLFLLCHII). Residues 64–77 (ASTEHILTFSSPNS) lie on the Extracellular side of the membrane. The helical transmembrane segment at 78-98 (IFINCLYTFRVLLYIAGLNML) threads the bilayer. Topologically, residues 99-128 (SAISIERCLSVMCPIWYRCHRPEHTSTVMC) are cytoplasmic. A helical transmembrane segment spans residues 129 to 149 (AMIWVLSLLLCILYRYFCGFL). Topologically, residues 150–163 (DTKYEDDYGCLAMN) are extracellular. A helical membrane pass occupies residues 164-184 (FLTTAYLMFLFVVLCVSSLAL). The Cytoplasmic portion of the chain corresponds to 185–203 (LARLFCGAGRMKLTRLYVT). A helical transmembrane segment spans residues 204–224 (ITLTLLVFLLCGLPCGFYWFL). The Extracellular segment spans residues 225–240 (LSKIKNVFSVFEFSLY). Residues 241-261 (LTSVVLTAINSCANPIIYFFV) traverse the membrane as a helical segment. The Cytoplasmic segment spans residues 262–301 (GSFRHRLKHQTLKMVLQSALQDTPETPENMVEMSRNKAEL).

This sequence belongs to the G-protein coupled receptor 1 family. Mas subfamily. As to expression, expressed in a subset of sensory neurons that includes nociceptors. Expressed in the subclass of non-peptidergic sensory neurons that are IB4(+) and VR1(-).

The protein resides in the cell membrane. Its function is as follows. Orphan receptor. May be a receptor for RFamide-family neuropeptides such as NPFF and NPAF, which are analgesic in vivo. May regulate nociceptor function and/or development, including the sensation or modulation of pain. The polypeptide is Mas-related G-protein coupled receptor member A6 (Mrgpra6) (Mus musculus (Mouse)).